Reading from the N-terminus, the 405-residue chain is Glucose-1-phosphate adenylyltransferase 1 (405 aa).

Residues Y96, G161, 176-177, and S194 contribute to the alpha-D-glucose 1-phosphate site; that span reads EK.

The protein belongs to the bacterial/plant glucose-1-phosphate adenylyltransferase family. Homotetramer.

The catalysed reaction is alpha-D-glucose 1-phosphate + ATP + H(+) = ADP-alpha-D-glucose + diphosphate. The protein operates within glycan biosynthesis; glycogen biosynthesis. Involved in the biosynthesis of ADP-glucose, a building block required for the elongation reactions to produce glycogen. Catalyzes the reaction between ATP and alpha-D-glucose 1-phosphate (G1P) to produce pyrophosphate and ADP-Glc. The polypeptide is Glucose-1-phosphate adenylyltransferase 1 (Vibrio vulnificus (strain YJ016)).